The chain runs to 1770 residues: Transposon Ty2-LR1 Gag-Pol polyprotein (1770 aa).

3 stretches are compositionally biased toward polar residues: residues 1 to 11 (MESQQLHQNPH), 19 to 39 (ASVT…SASN), and 49 to 60 (KVNSQQETTPGT). Disordered regions lie at residues 1 to 86 (MESQ…GQYQ) and 359 to 453 (QHSE…LPDH). The interval 295–397 (ENNINVSDRL…SSKPRAAKAH (103 aa)) is RNA-binding. The span at 369-381 (TSPNTTNTKVTTR) shows a compositional bias: low complexity. 2 stretches are compositionally biased toward polar residues: residues 399–408 (IATSSKFSRV) and 415–435 (ESTV…GQQQ). Asp-457 functions as the For protease activity; shared with dimeric partner in the catalytic mechanism. The integrase-type zinc finger-like stretch occupies residues 579-636 (NVNKSKSVNKYPYPLIHRMLGHANFRSIQKSLKKNAVTYLKESDIEWSNASTYQCPDC). The 176-residue stretch at 656 to 831 (ESYEPFQYLH…AGLDITTILP (176 aa)) folds into the Integrase catalytic domain. Positions 667 and 732 each coordinate Mg(2+). Disordered stretches follow at residues 1005 to 1038 (GGTI…MIDL), 1058 to 1135 (GTEE…KSSK), 1146 to 1165 (LPLP…VSKD), and 1170 to 1205 (HSRQ…TEIE). Polar residues-rich tracts occupy residues 1009–1024 (ESDT…FTAR) and 1065–1082 (QRNS…STPS). Basic and acidic residues predominate over residues 1151–1165 (LTHKSPTDTSDVSKD). The Bipartite nuclear localization signal signature appears at 1193 to 1227 (KKRSLEDNETEIEVSRDTWNNKNMRSLEPPRSKKR). The Reverse transcriptase Ty1/copia-type domain occupies 1353-1491 (NDYYITQLDI…DILGLEIKYQ (139 aa)). 6 residues coordinate Mg(2+): Asp-1361, Asp-1442, Asp-1443, Asp-1625, Glu-1667, and Asp-1700. Positions 1625 to 1767 (DASYGNQPYY…IKTFKLLTNK (143 aa)) constitute an RNase H Ty1/copia-type domain.

As to quaternary structure, the capsid protein forms a homotrimer, from which the VLPs are assembled. The protease is a homodimer, whose active site consists of two apposed aspartic acid residues. Initially, virus-like particles (VLPs) are composed of the structural unprocessed proteins Gag and Gag-Pol, and also contain the host initiator methionine tRNA (tRNA(i)-Met) which serves as a primer for minus-strand DNA synthesis, and a dimer of genomic Ty RNA. Processing of the polyproteins occurs within the particle and proceeds by an ordered pathway, called maturation. First, the protease (PR) is released by autocatalytic cleavage of the Gag-Pol polyprotein, and this cleavage is a prerequisite for subsequent processing at the remaining sites to release the mature structural and catalytic proteins. Maturation takes place prior to the RT reaction and is required to produce transposition-competent VLPs.

The protein localises to the cytoplasm. Its subcellular location is the nucleus. The enzyme catalyses DNA(n) + a 2'-deoxyribonucleoside 5'-triphosphate = DNA(n+1) + diphosphate. It catalyses the reaction Endonucleolytic cleavage to 5'-phosphomonoester.. Its function is as follows. Capsid protein (CA) is the structural component of the virus-like particle (VLP), forming the shell that encapsulates the retrotransposons dimeric RNA genome. The particles are assembled from trimer-clustered units and there are holes in the capsid shells that allow for the diffusion of macromolecules. CA also has nucleocapsid-like chaperone activity, promoting primer tRNA(i)-Met annealing to the multipartite primer-binding site (PBS), dimerization of Ty2 RNA and initiation of reverse transcription. The aspartyl protease (PR) mediates the proteolytic cleavages of the Gag and Gag-Pol polyproteins after assembly of the VLP. Functionally, reverse transcriptase/ribonuclease H (RT) is a multifunctional enzyme that catalyzes the conversion of the retro-elements RNA genome into dsDNA within the VLP. The enzyme displays a DNA polymerase activity that can copy either DNA or RNA templates, and a ribonuclease H (RNase H) activity that cleaves the RNA strand of RNA-DNA heteroduplexes during plus-strand synthesis and hydrolyzes RNA primers. The conversion leads to a linear dsDNA copy of the retrotransposon that includes long terminal repeats (LTRs) at both ends. In terms of biological role, integrase (IN) targets the VLP to the nucleus, where a subparticle preintegration complex (PIC) containing at least integrase and the newly synthesized dsDNA copy of the retrotransposon must transit the nuclear membrane. Once in the nucleus, integrase performs the integration of the dsDNA into the host genome. The chain is Transposon Ty2-LR1 Gag-Pol polyprotein (TY2B-LR1) from Saccharomyces cerevisiae (strain ATCC 204508 / S288c) (Baker's yeast).